The primary structure comprises 164 residues: Peroxynitrite isomerase (164 aa).

Residues 21–27 (GRWGGRG) carry the GXWXGXG motif. Positions 130 and 156 each coordinate heme b.

The protein belongs to the nitrobindin family. As to quaternary structure, homodimer. Heme b is required as a cofactor.

It catalyses the reaction peroxynitrite = nitrate. It participates in nitrogen metabolism. In terms of biological role, heme-binding protein able to scavenge peroxynitrite and to protect free L-tyrosine against peroxynitrite-mediated nitration, by acting as a peroxynitrite isomerase that converts peroxynitrite to nitrate. Therefore, this protein likely plays a role in peroxynitrite sensing and in the detoxification of reactive nitrogen and oxygen species (RNS and ROS, respectively). Is able to bind nitric oxide (NO) in vitro, but may act as a sensor of peroxynitrite levels in vivo. This Nocardioides sp. (strain ATCC BAA-499 / JS614) protein is Peroxynitrite isomerase.